A 250-amino-acid chain; its full sequence is Hydroxyacylglutathione hydrolase (250 aa).

Zn(2+)-binding residues include H53, H55, D57, H58, H111, D128, and H166.

The protein belongs to the metallo-beta-lactamase superfamily. Glyoxalase II family. As to quaternary structure, monomer. Requires Zn(2+) as cofactor.

The enzyme catalyses an S-(2-hydroxyacyl)glutathione + H2O = a 2-hydroxy carboxylate + glutathione + H(+). Its pathway is secondary metabolite metabolism; methylglyoxal degradation; (R)-lactate from methylglyoxal: step 2/2. Its function is as follows. Thiolesterase that catalyzes the hydrolysis of S-D-lactoyl-glutathione to form glutathione and D-lactic acid. This is Hydroxyacylglutathione hydrolase from Methylobacillus flagellatus (strain ATCC 51484 / DSM 6875 / VKM B-1610 / KT).